Reading from the N-terminus, the 342-residue chain is 4-hydroxy-3-methylbut-2-enyl diphosphate reductase (342 aa).

Residue C47 participates in [4Fe-4S] cluster binding. (2E)-4-hydroxy-3-methylbut-2-enyl diphosphate is bound by residues H78 and H111. Dimethylallyl diphosphate contacts are provided by H78 and H111. Residues H78 and H111 each contribute to the isopentenyl diphosphate site. C133 lines the [4Fe-4S] cluster pocket. H161 contributes to the (2E)-4-hydroxy-3-methylbut-2-enyl diphosphate binding site. H161 provides a ligand contact to dimethylallyl diphosphate. H161 lines the isopentenyl diphosphate pocket. E163 functions as the Proton donor in the catalytic mechanism. T201 provides a ligand contact to (2E)-4-hydroxy-3-methylbut-2-enyl diphosphate. C231 is a [4Fe-4S] cluster binding site. Residues S259, S260, N261, and S303 each coordinate (2E)-4-hydroxy-3-methylbut-2-enyl diphosphate. Dimethylallyl diphosphate contacts are provided by S259, S260, N261, and S303. The isopentenyl diphosphate site is built by S259, S260, N261, and S303.

The protein belongs to the IspH family. Requires [4Fe-4S] cluster as cofactor.

It carries out the reaction isopentenyl diphosphate + 2 oxidized [2Fe-2S]-[ferredoxin] + H2O = (2E)-4-hydroxy-3-methylbut-2-enyl diphosphate + 2 reduced [2Fe-2S]-[ferredoxin] + 2 H(+). The catalysed reaction is dimethylallyl diphosphate + 2 oxidized [2Fe-2S]-[ferredoxin] + H2O = (2E)-4-hydroxy-3-methylbut-2-enyl diphosphate + 2 reduced [2Fe-2S]-[ferredoxin] + 2 H(+). The protein operates within isoprenoid biosynthesis; dimethylallyl diphosphate biosynthesis; dimethylallyl diphosphate from (2E)-4-hydroxy-3-methylbutenyl diphosphate: step 1/1. It participates in isoprenoid biosynthesis; isopentenyl diphosphate biosynthesis via DXP pathway; isopentenyl diphosphate from 1-deoxy-D-xylulose 5-phosphate: step 6/6. In terms of biological role, catalyzes the conversion of 1-hydroxy-2-methyl-2-(E)-butenyl 4-diphosphate (HMBPP) into a mixture of isopentenyl diphosphate (IPP) and dimethylallyl diphosphate (DMAPP). Acts in the terminal step of the DOXP/MEP pathway for isoprenoid precursor biosynthesis. In Anaplasma marginale (strain Florida), this protein is 4-hydroxy-3-methylbut-2-enyl diphosphate reductase.